A 1153-amino-acid polypeptide reads, in one-letter code: ATP-dependent helicase/deoxyribonuclease subunit B (1153 aa).

Position 8-15 (8-15 (GRAGSGKS)) interacts with ATP. 4 residues coordinate [4Fe-4S] cluster: C786, C1104, C1107, and C1113.

The protein belongs to the helicase family. AddB/RexB type 1 subfamily. Heterodimer of AddA and AddB. The cofactor is Mg(2+). It depends on [4Fe-4S] cluster as a cofactor.

Functionally, the heterodimer acts as both an ATP-dependent DNA helicase and an ATP-dependent, dual-direction single-stranded exonuclease. Recognizes the chi site generating a DNA molecule suitable for the initiation of homologous recombination. The AddB subunit has 5' -&gt; 3' nuclease activity but not helicase activity. The polypeptide is ATP-dependent helicase/deoxyribonuclease subunit B (Clostridium acetobutylicum (strain ATCC 824 / DSM 792 / JCM 1419 / IAM 19013 / LMG 5710 / NBRC 13948 / NRRL B-527 / VKM B-1787 / 2291 / W)).